The chain runs to 557 residues: MAVQTDIEIARAARKKPIQEIGAGLGIPAEALIPYGHDKAKVGQGFIRGLEGRPDGKLILVTAINPTPAGEGKTTTTVGLGDGLNRIGKKAVICIREASLGPNFGMKGGAAGGGRAQVVPMEDMNLHFTGDFHAITAAHNLLAAMIDNHIYWGNALELDARRITWRRVMDMNDRALRDTVVNLGGVANGFPRQTGFDITVASEVMAILCLADDLEDLERRLGRIVVGYRRDKSPVYCRDLKAAGAMAVLLKDAMQPNLVQTIENNPAFVHGGPFANIAHGCNSVIATRTALKLADYVVTEAGFGADLGAEKFFDIKCRLAGLKPSAAVVVATVRALKMNGGVAREDLGREDVAALRRGCANLGRHIANVKGFGVPVVVAINHFTTDTEAEIEAVRAYAAGQGAEAFLCRHWAEGSAGIEDLAQKVVELAETPSMFAPLYPDDMPLFEKMETVARRIYHAHDVIADHVIRDQLRTWEEAGYGALPVCMAKTQYSFTTDAAIRGAPEGHSIPIREVRLAAGAGFVVAICGEIRTMPGLPSQPAAELIHLDEEGRIEGLF.

67–74 (TPAGEGKT) is a binding site for ATP.

This sequence belongs to the formate--tetrahydrofolate ligase family.

It catalyses the reaction (6S)-5,6,7,8-tetrahydrofolate + formate + ATP = (6R)-10-formyltetrahydrofolate + ADP + phosphate. It participates in one-carbon metabolism; tetrahydrofolate interconversion. The sequence is that of Formate--tetrahydrofolate ligase from Cereibacter sphaeroides (strain ATCC 17029 / ATH 2.4.9) (Rhodobacter sphaeroides).